The sequence spans 185 residues: Translocon-associated protein subunit gamma (185 aa).

N-acetylmethionine is present on Met-1. Topologically, residues Met-1–Lys-27 are lumenal. Ser-11 is modified (phosphoserine). The helical transmembrane segment at Ser-28–Trp-48 threads the bilayer. The Cytoplasmic portion of the chain corresponds to Arg-49–Asp-54. Residues Leu-55–Ala-76 traverse the membrane as a helical segment. Over Tyr-77–Thr-135 the chain is Lumenal. Residue Ser-105 is modified to Phosphoserine. A helical membrane pass occupies residues Phe-136 to Leu-157. The Cytoplasmic segment spans residues Lys-158 to Thr-163. The chain crosses the membrane as a helical span at residues Val-164–Ser-184.

It belongs to the TRAP-gamma family. As to quaternary structure, heterotetramer of TRAP-alpha, TRAP-beta, TRAP-delta and TRAP-gamma.

The protein resides in the endoplasmic reticulum membrane. Functionally, TRAP proteins are part of a complex whose function is to bind calcium to the ER membrane and thereby regulate the retention of ER resident proteins. This is Translocon-associated protein subunit gamma (SSR3) from Pongo abelii (Sumatran orangutan).